A 1893-amino-acid chain; its full sequence is Plexin-A4 (1893 aa).

Residues 1–23 (MKAMPWNWTCLLSHLLVVGMGSS) form the signal peptide. Positions 24–506 (TLLPRQPPQL…SERQLTRVPV (483 aa)) constitute a Sema domain. Topologically, residues 24 to 1236 (TLLPRQPPQL…IAPDSPLSLP (1213 aa)) are extracellular. 10 disulfides stabilise this stretch: Cys94–Cys103, Cys129–Cys137, Cys283–Cys404, Cys299–Cys355, Cys373–Cys392, Cys509–Cys526, Cys515–Cys557, Cys518–Cys535, Cys529–Cys541, and Cys592–Cys611. The PSI 1 domain maps to 508 to 558 (SCGQYRSCGECLGSGDPHCGWCVLHNTCTRKERCERSREPRRFASEMKQCV). Asn654 carries N-linked (GlcNAc...) asparagine glycosylation. 2 consecutive PSI domains span residues 654 to 701 (NCSV…EDCP) and 802 to 855 (KCGA…SKCT). 4 IPT/TIG domains span residues 857–951 (PRIT…YYFM), 953–1036 (LTLA…FQYV), 1039–1138 (PTIV…FTYY), and 1141–1229 (PVFE…YIAP). N-linked (GlcNAc...) asparagine glycosylation is found at Asn1006, Asn1131, and Asn1179. A helical transmembrane segment spans residues 1237-1257 (AIVSIAVAGGLLIIFIVAVLI). At 1258-1893 (AYKRKSRESD…QVITLMSLDS (636 aa)) the chain is on the cytoplasmic side. The residue at position 1349 (Lys1349) is an N6-acetyllysine.

The protein belongs to the plexin family. In terms of assembly, interacts with NRP1 and NRP2. Expressed in the developing nervous system. Widely expressed in both the central and peripheral nervous systems. Expressed in the peripheral ganglia, somatosensory, olfactory, visual, auditory and equilibrium systems.

It localises to the cell membrane. Its function is as follows. Coreceptor for SEMA3A. Necessary for signaling by class 3 semaphorins and subsequent remodeling of the cytoskeleton. Plays a role in axon guidance in the developing nervous system. Class 3 semaphorins bind to a complex composed of a neuropilin and a plexin. The plexin modulates the affinity of the complex for specific semaphorins, and its cytoplasmic domain is required for the activation of down-stream signaling events in the cytoplasm. This chain is Plexin-A4 (Plxna4), found in Mus musculus (Mouse).